The sequence spans 264 residues: Proliferating cell nuclear antigen 2 (264 aa).

Belongs to the PCNA family. Homotrimer. Oligomer. Interacts with ORC1 (via PIP-box motif). Interacts with FEN1.

It is found in the nucleus. The protein localises to the chromosome. Its subcellular location is the cytoplasm. May be involved in DNA damage response. Appears not to be involved in DNA replication in trophozoites. This Plasmodium falciparum (isolate 3D7) protein is Proliferating cell nuclear antigen 2.